The chain runs to 632 residues: DNA gyrase subunit B (632 aa).

Residues 419–533 (RELFIVEGES…SGYLYIAQPP (115 aa)) form the Toprim domain. Positions 425, 498, and 500 each coordinate Mg(2+).

It belongs to the type II topoisomerase GyrB family. Heterotetramer, composed of two GyrA and two GyrB chains. In the heterotetramer, GyrA contains the active site tyrosine that forms a transient covalent intermediate with DNA, while GyrB binds cofactors and catalyzes ATP hydrolysis. The cofactor is Mg(2+). Mn(2+) is required as a cofactor. Requires Ca(2+) as cofactor.

It is found in the cytoplasm. It carries out the reaction ATP-dependent breakage, passage and rejoining of double-stranded DNA.. In terms of biological role, a type II topoisomerase that negatively supercoils closed circular double-stranded (ds) DNA in an ATP-dependent manner to modulate DNA topology and maintain chromosomes in an underwound state. Negative supercoiling favors strand separation, and DNA replication, transcription, recombination and repair, all of which involve strand separation. Also able to catalyze the interconversion of other topological isomers of dsDNA rings, including catenanes and knotted rings. Type II topoisomerases break and join 2 DNA strands simultaneously in an ATP-dependent manner. The protein is DNA gyrase subunit B of Archaeoglobus fulgidus (strain ATCC 49558 / DSM 4304 / JCM 9628 / NBRC 100126 / VC-16).